Reading from the N-terminus, the 104-residue chain is Conantokin-P (104 aa).

Residues 1-26 form the signal peptide; that stretch reads MQLYTYLYLLVPLVTFHLILSTGTLA. Positions 27–80 are excised as a propeptide; the sequence is HGGTLTERRSTDTTALKPEPVLLQKSDARSTDDNDKDRLTQMKRILKKRGNKAR. Residues 29–87 form a disordered region; the sequence is GTLTERRSTDTTALKPEPVLLQKSDARSTDDNDKDRLTQMKRILKKRGNKARGEEEHSK. Over residues 52-66 the composition is skewed to basic and acidic residues; that stretch reads SDARSTDDNDKDRLT. A 4-carboxyglutamate mark is found at E83, E84, E90, E94, and E103. 2 residues coordinate a divalent metal cation: E90 and E94. C91 and C104 are disulfide-bonded.

This sequence belongs to the conotoxin B superfamily. As to expression, expressed by the venom duct.

It is found in the secreted. In terms of biological role, conantokins inhibit N-methyl-D-aspartate (NMDA) receptors. This toxin has the highest potency for the NR2B/GRIN2B subunit, followed by NR2A/GRIN2A, NR2C/GRIN2C, and NR2D/GRIN2D subunits. This Conus purpurascens (Purple cone) protein is Conantokin-P.